A 749-amino-acid chain; its full sequence is Small G protein signaling modulator 3 (749 aa).

A Rab-GAP TBC domain is found at 114 to 305 (GIPHGMRPQL…RIWDLFFYEG (192 aa)). Ser406 bears the Phosphoserine mark. Residues 415–439 (EDDLEALKAKNIKQTELVADLREAI) are a coiled coil. Residues 480 to 539 (SHRRRAKALLDFERHDDDELGFRKNDIITIVSQKDEHCWVGELNGLRGWFPAKFVEVLDE) form the SH3 domain. The RUN domain occupies 555-718 (GVTDLVRGTL…FAFSLSQDWE (164 aa)).

It belongs to the small G protein signaling modulator family. As to quaternary structure, interacts with GJA1. Interaction with GJA1 induces its degradation. Interacts via its RUN domain with the C-terminal region of NF2. Interacts with RAB3A, RAB4A, RAB5A, RAB8A, RAB11A, RAP1A, RAP1B, RAP2A, RAP2B and PDCD6IP. No interaction with RAB27A. In terms of tissue distribution, widely expressed.

Its subcellular location is the cytoplasm. In terms of biological role, may play a cooperative role in NF2-mediated growth suppression of cells. This is Small G protein signaling modulator 3 from Homo sapiens (Human).